Reading from the N-terminus, the 516-residue chain is Signal recognition particle protein (516 aa).

GTP contacts are provided by residues 108–115, 191–195, and 249–252; these read GLQGAGKT, DTAGR, and TKID. A disordered region spans residues 383–405; that stretch reads MTPEERENPDLLTPSRRRRIASG.

It belongs to the GTP-binding SRP family. SRP54 subfamily. Part of the signal recognition particle protein translocation system, which is composed of SRP and FtsY.

The protein resides in the cytoplasm. The enzyme catalyses GTP + H2O = GDP + phosphate + H(+). Involved in targeting and insertion of nascent membrane proteins into the cytoplasmic membrane. Binds to the hydrophobic signal sequence of the ribosome-nascent chain (RNC) as it emerges from the ribosomes. The SRP-RNC complex is then targeted to the cytoplasmic membrane where it interacts with the SRP receptor FtsY. The chain is Signal recognition particle protein from Streptococcus mutans serotype c (strain ATCC 700610 / UA159).